The following is a 424-amino-acid chain: UPF0229 protein YPTS_2141 (424 aa).

Positions 84–109 (TNDRVDRPQGGGGGGSGQGNAGKDGE) are disordered. The segment covering 92-105 (QGGGGGGSGQGNAG) has biased composition (gly residues).

It belongs to the UPF0229 family.

The polypeptide is UPF0229 protein YPTS_2141 (Yersinia pseudotuberculosis serotype IB (strain PB1/+)).